Consider the following 312-residue polypeptide: D-alanine--D-alanine ligase (312 aa).

Residues 99–304 enclose the ATP-grasp domain; it reads KKILKAEGIP…FEDLVEKILM (206 aa). 131 to 186 provides a ligand contact to ATP; the sequence is LQTLKLPVVIKAPREGSTIGIEFVFSKQELPKAIKKVLEIDKQLLVEEFIEGVEVT. Mg(2+)-binding residues include aspartate 257, glutamate 271, and asparagine 273.

It belongs to the D-alanine--D-alanine ligase family. It depends on Mg(2+) as a cofactor. Mn(2+) serves as cofactor.

It localises to the cytoplasm. The catalysed reaction is 2 D-alanine + ATP = D-alanyl-D-alanine + ADP + phosphate + H(+). Its pathway is cell wall biogenesis; peptidoglycan biosynthesis. Its function is as follows. Cell wall formation. In Carboxydothermus hydrogenoformans (strain ATCC BAA-161 / DSM 6008 / Z-2901), this protein is D-alanine--D-alanine ligase.